Here is a 468-residue protein sequence, read N- to C-terminus: Uronate isomerase (468 aa).

The protein belongs to the metallo-dependent hydrolases superfamily. Uronate isomerase family.

It catalyses the reaction D-glucuronate = D-fructuronate. It carries out the reaction aldehydo-D-galacturonate = keto-D-tagaturonate. It functions in the pathway carbohydrate metabolism; pentose and glucuronate interconversion. The polypeptide is Uronate isomerase (Bacteroides thetaiotaomicron (strain ATCC 29148 / DSM 2079 / JCM 5827 / CCUG 10774 / NCTC 10582 / VPI-5482 / E50)).